Reading from the N-terminus, the 103-residue chain is Histone H4 (103 aa).

A compositionally biased stretch (gly residues) spans 1–14; that stretch reads MSGRGKGGKGLGKG. The segment at 1–20 is disordered; that stretch reads MSGRGKGGKGLGKGGAKRHR. Serine 2 bears the N-acetylserine mark. Lysine 17 is modified (N6-acetyllysine). A DNA-binding region spans residues 17-21; the sequence is KRHRR. Lysine 80 carries the post-translational modification N6-methylated lysine.

Belongs to the histone H4 family. The nucleosome is a histone octamer containing two molecules each of H2A, H2B, H3 and H4 assembled in one H3-H4 heterotetramer and two H2A-H2B heterodimers. The octamer wraps approximately 147 bp of DNA.

It localises to the nucleus. Its subcellular location is the chromosome. Its function is as follows. Core component of nucleosome. Nucleosomes wrap and compact DNA into chromatin, limiting DNA accessibility to the cellular machineries which require DNA as a template. Histones thereby play a central role in transcription regulation, DNA repair, DNA replication and chromosomal stability. DNA accessibility is regulated via a complex set of post-translational modifications of histones, also called histone code, and nucleosome remodeling. The polypeptide is Histone H4 (Olisthodiscus luteus (Marine phytoflagellate)).